A 548-amino-acid chain; its full sequence is CBS domain-containing protein CBSCBSPB4 (548 aa).

Positions 1–18 (MANQGGPSRKSLSFSGHS) are enriched in polar residues. The interval 1–58 (MANQGGPSRKSLSFSGHSFQGRKKASENEGGGGGGSDLLPRRSLTSSRSSISLSGERS) is disordered. Ser-18 bears the Phosphoserine mark. The span at 37 to 56 (DLLPRRSLTSSRSSISLSGE) shows a compositional bias: low complexity. 4 CBS domains span residues 63–126 (VKRL…NLEE), 133–190 (MTKN…ERSV), 233–293 (IIPE…LPQE), and 301–358 (MTPN…AGST). The region spanning 411 to 498 (PNTFAFKLQD…KGLKLHLDYT (88 aa)) is the PB1 domain. The helical transmembrane segment at 521 to 543 (AAAYKTVAAGAALAAGLGVLVYL) threads the bilayer.

The protein localises to the membrane. This Arabidopsis thaliana (Mouse-ear cress) protein is CBS domain-containing protein CBSCBSPB4 (CBSCBSPB4).